Here is a 211-residue protein sequence, read N- to C-terminus: Dual specificity protein phosphatase 26 (211 aa).

A Tyrosine-protein phosphatase domain is found at 60 to 207 (NHADEVWPGL…LLALDRRLRQ (148 aa)). The active-site Phosphocysteine intermediate is the cysteine 152.

Belongs to the protein-tyrosine phosphatase family. Non-receptor class dual specificity subfamily. As to quaternary structure, interacts with HSF4.

Its subcellular location is the cytoplasm. It is found in the nucleus. The protein localises to the golgi apparatus. It carries out the reaction O-phospho-L-tyrosyl-[protein] + H2O = L-tyrosyl-[protein] + phosphate. The enzyme catalyses O-phospho-L-seryl-[protein] + H2O = L-seryl-[protein] + phosphate. It catalyses the reaction O-phospho-L-threonyl-[protein] + H2O = L-threonyl-[protein] + phosphate. Inactivates MAPK1 and MAPK3 which leads to dephosphorylation of heat shock factor protein 4 and a reduction in its DNA-binding activity. The polypeptide is Dual specificity protein phosphatase 26 (DUSP26) (Bos taurus (Bovine)).